The chain runs to 382 residues: MKKHLNLLREFSVPLVAGVVVALFWANLDPAGYRAFDSTPFWGSLSFHFISNELFMTLFFGIAAVEITQSCMPGGDLNPISRAVNPLFGTLGGVLGPVLVYLGLNALVGLPELRNGWGIPTATDIALAWLAARMVFGPGHPAVSYLLLLAVADDAIGLAIIALFYPDPNHPVVAAWLLLTLLGMLVAWGLGRRRVRSYWPYILLGGSLSWIGLHQAHLHPALALVFIIPFLPHRLRESRHLFDDDPGDRSPLAQFEHEWKVVVDFGLFLFGLANAGVEFSSIGTVTWLVLVSLLVGKTVGIFGFGLLAERLGFRRPRGMKRRDLLVAGVVAGTGFTVALFVSGSAFSDPVIQAAAKMGAMFSLAAALIGMLLGQLLRIRKVH.

10 helical membrane-spanning segments follow: residues phenylalanine 11–alanine 31, leucine 45–valine 65, leucine 91–proline 111, glycine 116–phenylalanine 136, tyrosine 145–tyrosine 165, proline 171–glycine 191, serine 197–histidine 214, tryptophan 287–leucine 307, leucine 324–serine 344, and alanine 353–glycine 373.

This sequence belongs to the NhaA Na(+)/H(+) (TC 2.A.33) antiporter family.

It localises to the cell inner membrane. It catalyses the reaction Na(+)(in) + 2 H(+)(out) = Na(+)(out) + 2 H(+)(in). Na(+)/H(+) antiporter that extrudes sodium in exchange for external protons. In Pelobacter propionicus (strain DSM 2379 / NBRC 103807 / OttBd1), this protein is Na(+)/H(+) antiporter NhaA 2.